Reading from the N-terminus, the 3946-residue chain is Hybrid PKS-NRPS synthetase lepA (3946 aa).

One can recognise a Ketosynthase family 3 (KS3) domain in the interval 9–440; the sequence is VEPIAIVGSA…GTNAHVILEG (432 aa). Catalysis depends on for beta-ketoacyl synthase activity residues C183, H320, and H363. Positions 553-871 are malonyl-CoA:ACP transacylase (MAT) domain; it reads IFTGQGAQWA…PYAGIMRRAT (319 aa). An N-terminal hotdog fold region spans residues 945–1073; the sequence is HELLGRRAPD…GRLILFKGEG (129 aa). A dehydratase (DH) domain region spans residues 945–1238; the sequence is HELLGRRAPD…RLQSFTEAKA (294 aa). Residues 945 to 1239 form the PKS/mFAS DH domain; the sequence is HELLGRRAPD…LQSFTEAKAL (295 aa). H977 serves as the catalytic Proton acceptor; for dehydratase activity. Positions 1088–1239 are C-terminal hotdog fold; that stretch reads LSPLDREMFY…LQSFTEAKAL (152 aa). Residue D1147 is the Proton donor; for dehydratase activity of the active site. The segment at 1380–1580 is methyltransferase (MT) domain; sequence LLNRFYTDGR…ATVSDLPSDG (201 aa). The segment at 2093-2266 is ketoreductase (KR) domain; sequence TYWMIGLNSE…AASVIDIGLV (174 aa). Over residues 2352 to 2365 the composition is skewed to low complexity; sequence SSQDSDQSNSTSAS. Residues 2352–2372 are disordered; that stretch reads SSQDSDQSNSTSASIRDQVSS. The region spanning 2378–2455 is the Carrier 1 domain; the sequence is EGTDVLLRCF…EICAEAIQKF (78 aa). S2415 is modified (O-(pantetheine 4'-phosphoryl)serine). Positions 2474–2531 are disordered; it reads KQATASPPEIGREEAQSTSRAGILPTDQDNDNSSDSESQRKSGASSSSGSGTRTPTSI. The span at 2508–2530 shows a compositional bias: low complexity; that stretch reads DSESQRKSGASSSSGSGTRTPTS. A condensation (C) domain region spans residues 2547–2976; that stretch reads PMSYAQSRLW…MQIQDGLLND (430 aa). The tract at residues 3000 to 3402 is adenylation (A) (KR) domain; that stretch reads FSQRAATDAN…GGLIFMGRLD (403 aa). Residues 3492 to 3511 form a disordered region; it reads GKVDRKALQDKPLPTEPDSS. The Carrier 2 domain occupies 3515–3594; the sequence is EALSLAEGEL…RMATLIDAEK (80 aa). Residue S3554 is modified to O-(pantetheine 4'-phosphoryl)serine. Residues 3633–3833 form a reductase (RED) domain region; it reads LTGSTGFLGM…RFSVLMKVVP (201 aa).

In the C-terminal section; belongs to the NRP synthetase family.

Functionally, hybrid PKS-NRPS synthetase; part of the gene cluster 23 that mediates the biosynthesis of a family of 2-pyridones known as leporins. The hybrid PKS-NRPS synthetase lepA and the enoyl reductase lepG are responsible for fusion of phenylalanine with a hexaketide and subsequent release of the stable tetramic acid precursor, pre-leporin C. Because lepA lacks a designated enoylreductase (ER) domain, the required activity is provided the enoyl reductase lepG. It is possible that the dehydrogenase lepF also participates in production of pre-leporin C. Cytochrome P450 monooxygenase lepH is then required for the ring expansion step to yield leporin C. Leporin C is then presumably further oxidized by the N-hydroxylase lepD to form leporin B. LepI may possess a function in biosynthesis upstream of lepA. Leporin B is further oxidized in the presence of ferric ion to give the leporin B trimer-iron chelate, but whether or not this reaction is catalyzed by an enzyme in the pathway or by ferric ion is not determined yet. This chain is Hybrid PKS-NRPS synthetase lepA, found in Aspergillus flavus (strain ATCC 200026 / FGSC A1120 / IAM 13836 / NRRL 3357 / JCM 12722 / SRRC 167).